The following is a 984-amino-acid chain: MORC family CW-type zinc finger protein 1 (984 aa).

Residues 284-353 (AFKDEVKKAE…RELKTARTLS (70 aa)) adopt a coiled-coil conformation. The CW-type zinc finger occupies 477–531 (AMGIPFIIQCDLCLKWRVLPSSTNYQEKEFFDIWICANNPNRLENSCHQVECLPS). Residues Cys-486, Cys-489, Cys-512, and Cys-523 each coordinate Zn(2+). 2 coiled-coil regions span residues 737–761 (DVSL…CNDV) and 900–934 (EISL…LQLG).

It localises to the nucleus. Functionally, required for spermatogenesis. Essential for de novo DNA methylation and silencing of transposable elements in the male embryonic germ cells. In Homo sapiens (Human), this protein is MORC family CW-type zinc finger protein 1.